Reading from the N-terminus, the 269-residue chain is Phosphonoacetaldehyde hydrolase (269 aa).

Asp-10 serves as the catalytic Nucleophile. Residues Asp-10 and Ala-12 each contribute to the Mg(2+) site. Lys-52 functions as the Schiff-base intermediate with substrate in the catalytic mechanism. Asp-186 is a Mg(2+) binding site.

It belongs to the HAD-like hydrolase superfamily. PhnX family. In terms of assembly, homodimer. Requires Mg(2+) as cofactor.

The catalysed reaction is phosphonoacetaldehyde + H2O = acetaldehyde + phosphate + H(+). Its function is as follows. Involved in phosphonate degradation. The polypeptide is Phosphonoacetaldehyde hydrolase (Salmonella typhi).